The following is a 132-amino-acid chain: Intraflagellar transport protein 20 homolog A (132 aa).

The stretch at 87–112 (EAQQQQLYALIAEKKMQLERYRIEYD) forms a coiled coil.

The protein resides in the golgi apparatus. Its subcellular location is the cis-Golgi network. It is found in the cytoplasm. It localises to the cytoskeleton. The protein localises to the microtubule organizing center. The protein resides in the centrosome. Its subcellular location is the centriole. It is found in the cell projection. It localises to the cilium. Involved in ciliary process assembly. May play a role in the trafficking of ciliary membrane proteins from the Golgi complex to the cilium. Regulates the platelet-derived growth factor receptor-alpha (PDGFRA) signaling pathway. Plays an important role in spermatogenesis, particularly spermiogenesis, when germ cells form flagella. In Xenopus laevis (African clawed frog), this protein is Intraflagellar transport protein 20 homolog A (ift20-a).